We begin with the raw amino-acid sequence, 224 residues long: tRNA (guanine-N(7)-)-methyltransferase (224 aa).

S-adenosyl-L-methionine is bound by residues Glu52, Asp77, and Asp126. Asp126 is an active-site residue. 2 residues coordinate substrate: Lys130 and Asp162.

This sequence belongs to the class I-like SAM-binding methyltransferase superfamily. TrmB family.

It carries out the reaction guanosine(46) in tRNA + S-adenosyl-L-methionine = N(7)-methylguanosine(46) in tRNA + S-adenosyl-L-homocysteine. It participates in tRNA modification; N(7)-methylguanine-tRNA biosynthesis. Catalyzes the formation of N(7)-methylguanine at position 46 (m7G46) in tRNA. This is tRNA (guanine-N(7)-)-methyltransferase from Christiangramia forsetii (strain DSM 17595 / CGMCC 1.15422 / KT0803) (Gramella forsetii).